A 176-amino-acid chain; its full sequence is NAD(P)H-quinone oxidoreductase subunit 6, chloroplastic (176 aa).

A run of 5 helical transmembrane segments spans residues 10–30, 32–52, 61–81, 92–112, and 152–172; these read FLLV…VLLP, PIYS…FYIL, AQLL…VMFM, LWTV…ISLI, and FFLP…GAIA.

This sequence belongs to the complex I subunit 6 family. In terms of assembly, NDH is composed of at least 16 different subunits, 5 of which are encoded in the nucleus.

Its subcellular location is the plastid. The protein localises to the chloroplast thylakoid membrane. It carries out the reaction a plastoquinone + NADH + (n+1) H(+)(in) = a plastoquinol + NAD(+) + n H(+)(out). The catalysed reaction is a plastoquinone + NADPH + (n+1) H(+)(in) = a plastoquinol + NADP(+) + n H(+)(out). Its function is as follows. NDH shuttles electrons from NAD(P)H:plastoquinone, via FMN and iron-sulfur (Fe-S) centers, to quinones in the photosynthetic chain and possibly in a chloroplast respiratory chain. The immediate electron acceptor for the enzyme in this species is believed to be plastoquinone. Couples the redox reaction to proton translocation, and thus conserves the redox energy in a proton gradient. This is NAD(P)H-quinone oxidoreductase subunit 6, chloroplastic (ndhG) from Nicotiana tabacum (Common tobacco).